A 505-amino-acid chain; its full sequence is COMPASS component BRE2 (505 aa).

One can recognise a B30.2/SPRY domain in the interval 70–295; it reads SANPFFTILG…LKQETTNKEF (226 aa). Residue S227 is modified to Phosphoserine. Residues 271-290 form a disordered region; that stretch reads EPWREDAENGPSRKKLKQET. Position 318 (K318) interacts with DNA. A disordered region spans residues 398-420; it reads RDESNDKNTTSAKKKKQQQKKKK. The segment covering 409–420 has biased composition (basic residues); it reads AKKKKQQQKKKK.

Belongs to the cclA family. In terms of assembly, component of the Set1C/COMPASS complex which consists of SET1(2), BRE2(2), SPP1(2), SDC1(1), SHG1(1), SWD1(1), SWD2(1), and SWD3(1). Interacts directly with SDC1.

Its subcellular location is the nucleus. It localises to the chromosome. It is found in the telomere. In terms of biological role, component of the Set1C/COMPASS complex that specifically mono-, di- and trimethylates histone H3 to form H3K4me1/2/3, which subsequently plays a role in telomere length maintenance and transcription elongation regulation. COMPASS recognizes ubiquitinated H2B on one face of the nucleosome which stimulates the methylation of H3 on the opposing face. This Saccharomyces cerevisiae (strain ATCC 204508 / S288c) (Baker's yeast) protein is COMPASS component BRE2.